A 150-amino-acid polypeptide reads, in one-letter code: Small ribosomal subunit protein uS15 (150 aa).

The disordered stretch occupies residues M1–Q22.

It belongs to the universal ribosomal protein uS15 family. In terms of assembly, part of the 30S ribosomal subunit.

This chain is Small ribosomal subunit protein uS15, found in Aeropyrum pernix (strain ATCC 700893 / DSM 11879 / JCM 9820 / NBRC 100138 / K1).